Reading from the N-terminus, the 346-residue chain is Histidinol-phosphate aminotransferase (346 aa).

K209 carries the post-translational modification N6-(pyridoxal phosphate)lysine.

This sequence belongs to the class-II pyridoxal-phosphate-dependent aminotransferase family. Histidinol-phosphate aminotransferase subfamily. As to quaternary structure, homodimer. It depends on pyridoxal 5'-phosphate as a cofactor.

The catalysed reaction is L-histidinol phosphate + 2-oxoglutarate = 3-(imidazol-4-yl)-2-oxopropyl phosphate + L-glutamate. The protein operates within amino-acid biosynthesis; L-histidine biosynthesis; L-histidine from 5-phospho-alpha-D-ribose 1-diphosphate: step 7/9. The polypeptide is Histidinol-phosphate aminotransferase (Vibrio vulnificus (strain YJ016)).